A 250-amino-acid polypeptide reads, in one-letter code: Heme oxygenase 2 (250 aa).

H16 is a binding site for heme b. The segment at 228–250 (QDRPGSTEARSTAGHPITLMVGE) is disordered.

It belongs to the heme oxygenase family. As to quaternary structure, homodimer.

The catalysed reaction is heme b + 3 reduced [NADPH--hemoprotein reductase] + 3 O2 = biliverdin IXalpha + CO + Fe(2+) + 3 oxidized [NADPH--hemoprotein reductase] + 3 H2O + H(+). Functionally, catalyzes the opening of the heme ring with the release of iron. Key enzyme in the synthesis of the chromophoric part of the photosynthetic antennae. The sequence is that of Heme oxygenase 2 (pbsA2) from Synechocystis sp. (strain ATCC 27184 / PCC 6803 / Kazusa).